We begin with the raw amino-acid sequence, 405 residues long: Type II secretion system protein F (405 aa).

The Cytoplasmic segment spans residues 1–168 (MAAFEYLALD…QRQQSRQKIQ (168 aa)). Residues Thr-97, Glu-151, and Asp-155 each coordinate Ca(2+). A helical membrane pass occupies residues 169 to 189 (LALLYPVILMVASLAIVGFLL). Residues 190–219 (GYVVPDVVRVFIDSGQTLPLLTRVLIGVSD) lie on the Periplasmic side of the membrane. Residues 220–239 (WVKAWGALAFVAAIGGVIGF) traverse the membrane as a helical segment. At 240-376 (RYALRKDAFR…IGLMVGLFEP (137 aa)) the chain is on the cytoplasmic side. The chain crosses the membrane as a helical span at residues 377–397 (FMLIFMGAVVLVIVLAILLPI). The Periplasmic portion of the chain corresponds to 398 to 405 (LSLNQLVG).

Belongs to the GSP F family. Type II secretion system is composed of four main components: the outer membrane complex, the inner membrane complex, the cytoplasmic secretion ATPase and the periplasm-spanning pseudopilus. Homodimer. Interacts with XcpR/GspE and XcpY/GspL components.

It localises to the cell inner membrane. Component of the type II secretion system inner membrane complex required for the energy-dependent secretion of extracellular factors such as proteases and toxins from the periplasm. This Pseudomonas aeruginosa (strain ATCC 15692 / DSM 22644 / CIP 104116 / JCM 14847 / LMG 12228 / 1C / PRS 101 / PAO1) protein is Type II secretion system protein F (xcpS).